Here is a 241-residue protein sequence, read N- to C-terminus: DNA repair protein RecO (241 aa).

This sequence belongs to the RecO family.

Involved in DNA repair and RecF pathway recombination. In Phocaeicola vulgatus (strain ATCC 8482 / DSM 1447 / JCM 5826 / CCUG 4940 / NBRC 14291 / NCTC 11154) (Bacteroides vulgatus), this protein is DNA repair protein RecO.